We begin with the raw amino-acid sequence, 692 residues long: Formate hydrogenlyase transcriptional activator (692 aa).

A GAF domain is found at 202–344 (DIDELVSEVA…QIAERVAIAV (143 aa)). The Sigma-54 factor interaction domain occupies 381–610 (IIGRSEAMYN…LENVVERAVL (230 aa)). Residues 409–416 (GETGTGKE) and 472–481 (ADKSSLFLDE) contribute to the ATP site. A DNA-binding region (H-T-H motif) is located at residues 663-682 (PKGAAQRLGLKRTTLLSRMK).

Functionally, required for induction of expression of the formate dehydrogenase H and hydrogenase-3 structural genes. This is Formate hydrogenlyase transcriptional activator (fhlA) from Salmonella typhimurium (strain LT2 / SGSC1412 / ATCC 700720).